A 489-amino-acid polypeptide reads, in one-letter code: Cobyric acid synthase (489 aa).

In terms of domain architecture, GATase cobBQ-type spans 247-439 (ALKVVVPVLP…IHGVFDEPAA (193 aa)). Cys328 acts as the Nucleophile in catalysis. Residue His431 is part of the active site.

This sequence belongs to the CobB/CobQ family. CobQ subfamily.

It functions in the pathway cofactor biosynthesis; adenosylcobalamin biosynthesis. Catalyzes amidations at positions B, D, E, and G on adenosylcobyrinic A,C-diamide. NH(2) groups are provided by glutamine, and one molecule of ATP is hydrogenolyzed for each amidation. In Marinobacter nauticus (strain ATCC 700491 / DSM 11845 / VT8) (Marinobacter aquaeolei), this protein is Cobyric acid synthase.